We begin with the raw amino-acid sequence, 523 residues long: Sorting nexin-2 (523 aa).

The segment at M1–T104 is disordered. Composition is skewed to low complexity over residues L27 to P48 and S93 to T104. S97 is subject to Phosphoserine. Residues T101 and T104 each carry the phosphothreonine modification. Phosphoserine is present on residues S117 and S119. The region spanning F140–R269 is the PX domain. Residues R183, S185, K211, and R235 each contribute to the a 1,2-diacyl-sn-glycero-3-phospho-(1D-myo-inositol-3-phosphate) site. S185 carries the post-translational modification Phosphoserine. The segment at Q260–A523 is interaction with RhoG. Phosphoserine is present on S277. The membrane-binding amphipathic helix stretch occupies residues G278–M295. The BAR domain occupies M299–A523. K473 carries the N6-acetyllysine modification.

The protein belongs to the sorting nexin family. In terms of assembly, predominantly forms heterodimers with BAR domain-containing sorting nexins SNX5, SNX6 and SNX32; can self-associate to form homodimers. The heterodimers are proposed to self-assemble into helical arrays on the membrane to stabilize and expand local membrane curvature underlying endosomal tubule formation. Thought to be a component of the originally described retromer complex (also called SNX-BAR retromer) which is a pentamer containing the heterotrimeric retromer cargo-selective complex (CSC), also described as vacuolar protein sorting subcomplex (VPS), and a heterodimeric membrane-deforming subcomplex formed between SNX1 or SNX2 and SNX5 or SNX6 (also called SNX-BAR subcomplex); the respective CSC and SNX-BAR subcomplexes associate with low affinity. Interacts with SNX5, SNX6, SNX32, VPS26A, VPS29, VPS35, FNBP1, KALRN, RHOG (GDP-bound form).

It localises to the early endosome membrane. The protein resides in the cell projection. Its subcellular location is the lamellipodium. In terms of biological role, involved in several stages of intracellular trafficking. Interacts with membranes containing phosphatidylinositol 3-phosphate (PtdIns(3P)) or phosphatidylinositol 3,5-bisphosphate (PtdIns(3,5)P2). Acts in part as component of the retromer membrane-deforming SNX-BAR subcomplex. The SNX-BAR retromer mediates retrograde transport of cargo proteins from endosomes to the trans-Golgi network (TGN) and is involved in endosome-to-plasma membrane transport for cargo protein recycling. The SNX-BAR subcomplex functions to deform the donor membrane into a tubular profile called endosome-to-TGN transport carrier (ETC). Can sense membrane curvature and has in vitro vesicle-to-membrane remodeling activity. Required for retrograde endosome-to-TGN transport of TGN38. Promotes KALRN- and RHOG-dependent but retromer-independent membrane remodeling such as lamellipodium formation; the function is dependent on GEF activity of KALRN. This is Sorting nexin-2 (SNX2) from Pongo abelii (Sumatran orangutan).